The primary structure comprises 551 residues: Cation/acetate symporter ActP (551 aa).

Helical transmembrane passes span 34–54 (IEAI…TYWA), 77–97 (GLAI…SALV), 104–124 (GLIY…LIAE), 150–170 (LSAC…MVGA), 184–204 (VAVV…GMLA), 207–227 (WVQI…ALMV), 263–283 (ISAL…PHIL), 304–324 (GFIG…ILLV), 356–376 (FFLG…VAGL), 406–426 (VSKI…ILFE), 430–450 (IAFM…PIIF), 469–489 (LGLL…VTIL), and 498–518 (YEYP…FFSI).

It belongs to the sodium:solute symporter (SSF) (TC 2.A.21) family.

The protein localises to the cell inner membrane. Its function is as follows. Transports acetate. The protein is Cation/acetate symporter ActP of Yersinia enterocolitica serotype O:8 / biotype 1B (strain NCTC 13174 / 8081).